Consider the following 345-residue polypeptide: L-threonine 3-dehydrogenase (345 aa).

Cysteine 42 lines the Zn(2+) pocket. Catalysis depends on charge relay system residues threonine 44 and histidine 47. Residues histidine 67, glutamate 68, cysteine 97, cysteine 100, cysteine 103, and cysteine 111 each contribute to the Zn(2+) site. Residues isoleucine 179, aspartate 199, arginine 204, 266 to 268 (LGI), and 290 to 291 (IY) each bind NAD(+).

This sequence belongs to the zinc-containing alcohol dehydrogenase family. In terms of assembly, homotetramer. The cofactor is Zn(2+).

It is found in the cytoplasm. It catalyses the reaction L-threonine + NAD(+) = (2S)-2-amino-3-oxobutanoate + NADH + H(+). It participates in amino-acid degradation; L-threonine degradation via oxydo-reductase pathway; glycine from L-threonine: step 1/2. Catalyzes the NAD(+)-dependent oxidation of L-threonine to 2-amino-3-ketobutyrate. This is L-threonine 3-dehydrogenase from Rhizobium rhizogenes (strain K84 / ATCC BAA-868) (Agrobacterium radiobacter).